Here is a 114-residue protein sequence, read N- to C-terminus: uncharacterized protein (114 aa).

Helical transmembrane passes span 21-41 (LASS…VCLF), 65-85 (GCFS…SALI), and 93-113 (LSVF…ILTD).

Its subcellular location is the membrane. This is an uncharacterized protein from Saccharomyces cerevisiae (strain ATCC 204508 / S288c) (Baker's yeast).